Here is a 371-residue protein sequence, read N- to C-terminus: Cytochrome b (371 aa).

4 helical membrane-spanning segments follow: residues 25 to 45 (FGSM…FLAV), 69 to 90 (WMMQ…YIHI), 105 to 125 (WMSG…GYVL), and 170 to 190 (FFAL…LHVI). Residues H75 and H89 each contribute to the heme b site. Positions 174 and 188 each coordinate heme b. H193 lines the a ubiquinone pocket. 4 helical membrane passes run 218 to 238 (YKDL…VSFF), 280 to 300 (LGGA…PFTH), 312 to 332 (LSQL…WAAT), and 339 to 358 (FIII…ISTP).

Belongs to the cytochrome b family. As to quaternary structure, the cytochrome bc1 complex contains 3 respiratory subunits (MT-CYB, CYC1 and UQCRFS1), 2 core proteins (UQCRC1 and UQCRC2) and probably 6 low-molecular weight proteins. Heme b is required as a cofactor.

It localises to the mitochondrion inner membrane. Functionally, component of the ubiquinol-cytochrome c reductase complex (complex III or cytochrome b-c1 complex) that is part of the mitochondrial respiratory chain. The b-c1 complex mediates electron transfer from ubiquinol to cytochrome c. Contributes to the generation of a proton gradient across the mitochondrial membrane that is then used for ATP synthesis. In Python sebae (African rock python), this protein is Cytochrome b (MT-CYB).